Consider the following 318-residue polypeptide: Aspartate carbamoyltransferase catalytic subunit (318 aa).

Residues Arg-56 and Thr-57 each coordinate carbamoyl phosphate. Residue Lys-84 participates in L-aspartate binding. Carbamoyl phosphate contacts are provided by Arg-106, His-143, and Gln-146. L-aspartate is bound by residues Arg-176 and Arg-230. Carbamoyl phosphate contacts are provided by Gly-271 and Pro-272.

Belongs to the aspartate/ornithine carbamoyltransferase superfamily. ATCase family. As to quaternary structure, heterododecamer (2C3:3R2) of six catalytic PyrB chains organized as two trimers (C3), and six regulatory PyrI chains organized as three dimers (R2).

It carries out the reaction carbamoyl phosphate + L-aspartate = N-carbamoyl-L-aspartate + phosphate + H(+). Its pathway is pyrimidine metabolism; UMP biosynthesis via de novo pathway; (S)-dihydroorotate from bicarbonate: step 2/3. Functionally, catalyzes the condensation of carbamoyl phosphate and aspartate to form carbamoyl aspartate and inorganic phosphate, the committed step in the de novo pyrimidine nucleotide biosynthesis pathway. The protein is Aspartate carbamoyltransferase catalytic subunit of Mycobacterium avium (strain 104).